We begin with the raw amino-acid sequence, 20 residues long: Toxin TpF21-Cocle (20 aa).

An LCN-type CS-alpha/beta domain is found at 1–20; the sequence is KDGYLVGNDGCKYSCNTYPK.

This sequence belongs to the long (4 C-C) scorpion toxin superfamily. Sodium channel inhibitor family. Beta subfamily. As to expression, expressed by the venom gland.

It is found in the secreted. In terms of biological role, beta toxins bind voltage-independently at site-4 of sodium channels (Nav) and shift the voltage of activation toward more negative potentials thereby affecting sodium channel activation and promoting spontaneous and repetitive firing. This Tityus pachyurus (Colombian scorpion) protein is Toxin TpF21-Cocle.